Consider the following 84-residue polypeptide: MGRTPTAVQVKSFTKQGQQRRVCRDLPLKNTKNGLSPGMRTCFLYLRFFPCLSWMSLKWTQAVHCARNIVLSFMLLLLLLNYNM.

This Homo sapiens (Human) protein is Putative protein BCE-1 (BCE1).